A 605-amino-acid chain; its full sequence is 9-cis-epoxycarotenoid dioxygenase NCED1, chloroplastic (605 aa).

The transit peptide at 1-16 (MATTTSHATNTWIKTK) directs the protein to the chloroplast. The disordered stretch occupies residues 55–89 (ILHFPKQSSNYQTPKNNTISHPKQENNNSSSSSTS). The segment covering 60–75 (KQSSNYQTPKNNTISH) has biased composition (polar residues). Residues 80 to 89 (NNNSSSSSTS) show a composition bias toward low complexity. Residues His-302, His-351, His-416, and His-592 each contribute to the Fe cation site.

This sequence belongs to the carotenoid oxygenase family. Fe(2+) serves as cofactor. Expressed in developing and ripening fruits. Highly expressed in pulp. Observed in unpollinated ovaries (e.g. ovules, placenta and pericarp). Expressed in flowers.

Its subcellular location is the plastid. It is found in the chloroplast stroma. The catalysed reaction is a 9-cis-epoxycarotenoid + O2 = a 12'-apo-carotenal + 2-cis,4-trans-xanthoxin. It carries out the reaction 9-cis-violaxanthin + O2 = (3S,5R,6S)-5,6-epoxy-3-hydroxy-5,6-dihydro-12'-apo-beta-caroten-12'-al + 2-cis,4-trans-xanthoxin. The enzyme catalyses 9'-cis-neoxanthin + O2 = (3S,5R,6R)-3,5-dihydroxy-6,7-didehydro-5,6-dihydro-12'-apo-beta-caroten-12'-al + 2-cis,4-trans-xanthoxin. Its pathway is plant hormone biosynthesis; abscisate biosynthesis. Has a 11,12(11',12') 9-cis epoxycarotenoid cleavage activity. Catalyzes the first step of abscisic-acid (ABA) biosynthesis from carotenoids. Required for ABA accumulation upon drought. Required for ABA-mediated regulation of anther/pollen development, including metabolism, cell wall modification and transcription level. Positive regulator of fruit ripening involved in the biosynthesis of abscisic acid (ABA); initiates ABA biosynthesis at the onset of fruit ripening. Modulates the degree of pigmentation and carotenoid composition as well as pectin catabolism during ripening and may regulate the ethylene production and action in climacteric tomato fruit. In Solanum lycopersicum (Tomato), this protein is 9-cis-epoxycarotenoid dioxygenase NCED1, chloroplastic.